Consider the following 318-residue polypeptide: MTKRHLLSAGDLTRDDATAILDDADRFREALLGREVKKLPTLRGRTIITMFYENSTRTRVSFEVAGKWMSADVINVSASGSSVAKGESLRDTALTLRAAGADALIIRHPASGAAQQLAEWTVEEDGGGPSVINAGDGTHEHPTQALLDALTIRQRLGSVEGKRVVIVGDVLHSRVARSNVTLLHTLGAEVVLVSPPTLLPRGVENWPVTVSYDLDAELPAADAVLMLRVQAERMNGSFFPSAREYSVRYGLSEKRQAMLPDRAIVLHPGPMVRGMEISFPVADSPQSAVLQQVSNGVHVRMAVLFHLLVGADREAINV.

Carbamoyl phosphate contacts are provided by Arg-57 and Thr-58. Lys-85 serves as a coordination point for L-aspartate. Carbamoyl phosphate contacts are provided by Arg-107, His-141, and Gln-144. L-aspartate-binding residues include Arg-174 and Arg-228. Residues Gly-269 and Pro-270 each coordinate carbamoyl phosphate.

It belongs to the aspartate/ornithine carbamoyltransferase superfamily. ATCase family. In terms of assembly, heterododecamer (2C3:3R2) of six catalytic PyrB chains organized as two trimers (C3), and six regulatory PyrI chains organized as three dimers (R2).

The enzyme catalyses carbamoyl phosphate + L-aspartate = N-carbamoyl-L-aspartate + phosphate + H(+). Its pathway is pyrimidine metabolism; UMP biosynthesis via de novo pathway; (S)-dihydroorotate from bicarbonate: step 2/3. Functionally, catalyzes the condensation of carbamoyl phosphate and aspartate to form carbamoyl aspartate and inorganic phosphate, the committed step in the de novo pyrimidine nucleotide biosynthesis pathway. This is Aspartate carbamoyltransferase catalytic subunit from Mycolicibacterium smegmatis (strain ATCC 700084 / mc(2)155) (Mycobacterium smegmatis).